A 62-amino-acid polypeptide reads, in one-letter code: Large ribosomal subunit protein uL30 (62 aa).

The protein belongs to the universal ribosomal protein uL30 family. As to quaternary structure, part of the 50S ribosomal subunit.

This Alkalilimnicola ehrlichii (strain ATCC BAA-1101 / DSM 17681 / MLHE-1) protein is Large ribosomal subunit protein uL30.